The following is a 419-amino-acid chain: Serine hydroxymethyltransferase (419 aa).

Residues Leu-121 and 125-127 each bind (6S)-5,6,7,8-tetrahydrofolate; that span reads GHL. Position 230 is an N6-(pyridoxal phosphate)lysine (Lys-230). 354–356 provides a ligand contact to (6S)-5,6,7,8-tetrahydrofolate; it reads SPF.

Belongs to the SHMT family. Homodimer. Requires pyridoxal 5'-phosphate as cofactor.

The protein localises to the cytoplasm. It catalyses the reaction (6R)-5,10-methylene-5,6,7,8-tetrahydrofolate + glycine + H2O = (6S)-5,6,7,8-tetrahydrofolate + L-serine. The protein operates within one-carbon metabolism; tetrahydrofolate interconversion. Its pathway is amino-acid biosynthesis; glycine biosynthesis; glycine from L-serine: step 1/1. Functionally, catalyzes the reversible interconversion of serine and glycine with tetrahydrofolate (THF) serving as the one-carbon carrier. This reaction serves as the major source of one-carbon groups required for the biosynthesis of purines, thymidylate, methionine, and other important biomolecules. Also exhibits THF-independent aldolase activity toward beta-hydroxyamino acids, producing glycine and aldehydes, via a retro-aldol mechanism. The chain is Serine hydroxymethyltransferase from Prochlorococcus marinus (strain SARG / CCMP1375 / SS120).